Here is a 244-residue protein sequence, read N- to C-terminus: Sugar fermentation stimulation protein homolog (244 aa).

It belongs to the SfsA family.

This is Sugar fermentation stimulation protein homolog from Dinoroseobacter shibae (strain DSM 16493 / NCIMB 14021 / DFL 12).